Here is a 568-residue protein sequence, read N- to C-terminus: Methionine--tRNA ligase (568 aa).

The short motif at 10 to 20 (PYVQSVPHLGN) is the 'HIGH' region element. Zn(2+)-binding residues include Cys-143, Cys-146, Cys-156, and Cys-159. Residues 333-337 (KFSKS) carry the 'KMSKS' region motif. Lys-336 serves as a coordination point for ATP.

It belongs to the class-I aminoacyl-tRNA synthetase family. MetG type 1 subfamily. The cofactor is Zn(2+).

It localises to the cytoplasm. The enzyme catalyses tRNA(Met) + L-methionine + ATP = L-methionyl-tRNA(Met) + AMP + diphosphate. Is required not only for elongation of protein synthesis but also for the initiation of all mRNA translation through initiator tRNA(fMet) aminoacylation. In Metallosphaera sedula (strain ATCC 51363 / DSM 5348 / JCM 9185 / NBRC 15509 / TH2), this protein is Methionine--tRNA ligase.